Here is a 459-residue protein sequence, read N- to C-terminus: Polycomb protein mes-6 (459 aa).

WD repeat units lie at residues 146 to 186, 192 to 231, 305 to 346, 370 to 409, and 415 to 454; these read SVGW…CLIV, CHAG…VKEH, MHSD…GEVE, SGSA…ETNP, and VGSR…VDAK.

The protein belongs to the WD repeat ESC family. As to quaternary structure, interacts directly with the N-terminal domain of mes-2. Forms a heterotrimeric complex with mes-2 and mes-3. Does not interact with mes-4. In terms of tissue distribution, in adults, it is predominantly expressed in the germline, and weakly expressed in intestinal cells.

The protein resides in the nucleus. Its function is as follows. Polycomb group (PcG) protein. PcG proteins act by forming multiprotein complexes, which are required to maintain the transcriptionally repressive state of homeotic genes throughout development. In association with the nfya-1-NF-Y complex, may play a role in repressing the expression of the homeobox protein egl-5 in tissues such as the head. PcG proteins are not required to initiate repression, but to maintain it during later stages of development. The mes-2/mes-3/mes-6 complex may participate in the global inactivation of the X chromosomes in germline cells. The complex may act via methylation of histone H3 'Lys-27', rendering chromatin heritably changed in its expressibility. This complex is required to exclude mes-4 from the inactivated X-chromosomes in germline cells. Required for small-RNA-induced H3K27 trimethylation. In Caenorhabditis elegans, this protein is Polycomb protein mes-6.